A 181-amino-acid polypeptide reads, in one-letter code: Large ribosomal subunit protein uL30 (181 aa).

It belongs to the universal ribosomal protein uL30 family. In terms of assembly, part of the 50S ribosomal subunit.

This Hyperthermus butylicus (strain DSM 5456 / JCM 9403 / PLM1-5) protein is Large ribosomal subunit protein uL30.